A 169-amino-acid polypeptide reads, in one-letter code: Ribosomal RNA large subunit methyltransferase H (169 aa).

Residues leucine 85, glycine 117, and 136 to 141 contribute to the S-adenosyl-L-methionine site; that span reads LGELTW.

This sequence belongs to the RNA methyltransferase RlmH family. In terms of assembly, homodimer.

It is found in the cytoplasm. It catalyses the reaction pseudouridine(1915) in 23S rRNA + S-adenosyl-L-methionine = N(3)-methylpseudouridine(1915) in 23S rRNA + S-adenosyl-L-homocysteine + H(+). Its function is as follows. Specifically methylates the pseudouridine at position 1915 (m3Psi1915) in 23S rRNA. The sequence is that of Ribosomal RNA large subunit methyltransferase H from Brucella ovis (strain ATCC 25840 / 63/290 / NCTC 10512).